The following is an 894-amino-acid chain: Protein NLP9 (894 aa).

The 87-residue stretch at 517–603 (QEISGARRLE…LDSVQGVEGG (87 aa)) folds into the RWP-RK domain. Residues 578 to 598 (RKINKVNRSLRKIQTVLDSVQ) are a coiled coil. Residues 732 to 763 (NTRIERGNGTVEPNHSISSSMSDSSNSSGAVL) form a disordered region. A compositionally biased stretch (low complexity) spans 747–763 (SISSSMSDSSNSSGAVL). Positions 792–875 (TLTVKATYRE…HTVKFLVRDI (84 aa)) constitute a PB1 domain.

It localises to the nucleus. In terms of biological role, probable transcription factor. The chain is Protein NLP9 (NLP9) from Arabidopsis thaliana (Mouse-ear cress).